A 905-amino-acid polypeptide reads, in one-letter code: uncharacterized protein (905 aa).

WD repeat units follow at residues arginine 42–valine 82, glycine 86–lysine 128, serine 136–serine 175, and valine 177–tyrosine 217. 2 positions are modified to phosphoserine: serine 394 and serine 397.

The protein belongs to the WD repeat mio family.

This is an uncharacterized protein from Schizosaccharomyces pombe (strain 972 / ATCC 24843) (Fission yeast).